The sequence spans 249 residues: 3-deoxy-manno-octulosonate cytidylyltransferase (249 aa).

Belongs to the KdsB family.

It localises to the cytoplasm. It catalyses the reaction 3-deoxy-alpha-D-manno-oct-2-ulosonate + CTP = CMP-3-deoxy-beta-D-manno-octulosonate + diphosphate. It functions in the pathway nucleotide-sugar biosynthesis; CMP-3-deoxy-D-manno-octulosonate biosynthesis; CMP-3-deoxy-D-manno-octulosonate from 3-deoxy-D-manno-octulosonate and CTP: step 1/1. It participates in bacterial outer membrane biogenesis; lipopolysaccharide biosynthesis. Activates KDO (a required 8-carbon sugar) for incorporation into bacterial lipopolysaccharide in Gram-negative bacteria. The protein is 3-deoxy-manno-octulosonate cytidylyltransferase of Serratia proteamaculans (strain 568).